A 187-amino-acid polypeptide reads, in one-letter code: Pseudo histidine-containing phosphotransfer protein 1 (187 aa).

In terms of domain architecture, HPt spans 74–169 (SPNFVEEVVT…AVLRQKLESY (96 aa)).

Its function is as follows. Functions as a two-component phosphorelay mediator between cytokinin sensor histidine kinases and response regulators (B-type ARRs). Plays an important role in propagating cytokinin signal transduction. The polypeptide is Pseudo histidine-containing phosphotransfer protein 1 (Oryza sativa subsp. japonica (Rice)).